The following is a 185-amino-acid chain: Ribosome-recycling factor (185 aa).

The protein belongs to the RRF family.

Its subcellular location is the cytoplasm. Functionally, responsible for the release of ribosomes from messenger RNA at the termination of protein biosynthesis. May increase the efficiency of translation by recycling ribosomes from one round of translation to another. The sequence is that of Ribosome-recycling factor from Listeria monocytogenes serovar 1/2a (strain ATCC BAA-679 / EGD-e).